The following is a 23-amino-acid chain: Acidic phospholipase A2 CTs-A1 (23 aa).

It depends on Ca(2+) as a cofactor. Post-translationally, contains 7 disulfide bonds. As to expression, expressed by the venom gland.

The protein localises to the secreted. It catalyses the reaction a 1,2-diacyl-sn-glycero-3-phosphocholine + H2O = a 1-acyl-sn-glycero-3-phosphocholine + a fatty acid + H(+). Snake venom phospholipase A2 (PLA2) that shows a moderate inhibition of ADP-induced human platelet aggregation when tested on platelet rich plasma. Exhibits moderate hydrolytic activities and prefers the anionic micelles (dPPC with deoxycholate) to the zwitterionic micelles (dPPC with Triton X-100). PLA2 catalyzes the calcium-dependent hydrolysis of the 2-acyl groups in 3-sn-phosphoglycerides. The protein is Acidic phospholipase A2 CTs-A1 of Trimeresurus stejnegeri (Chinese green tree viper).